The primary structure comprises 119 residues: UPF0102 protein MS1289 (119 aa).

It belongs to the UPF0102 family.

The protein is UPF0102 protein MS1289 of Mannheimia succiniciproducens (strain KCTC 0769BP / MBEL55E).